Consider the following 690-residue polypeptide: Quinohemoprotein alcohol dehydrogenase ADH IIB (690 aa).

The first 22 residues, 1–22 (MKKPLRTSLLMLCLATPLAALA), serve as a signal peptide directing secretion. Pyrroloquinoline quinone is bound at residue glutamate 81. Cysteine 127 and cysteine 128 are disulfide-bonded. Pyrroloquinoline quinone-binding positions include arginine 133, threonine 177, and 193-194 (GA). Glutamate 195 is a binding site for Ca(2+). Threonine 252 lines the pyrroloquinoline quinone pocket. Residues asparagine 272 and aspartate 317 each contribute to the Ca(2+) site. The active-site Proton acceptor is aspartate 317. Residues lysine 344, 404–405 (NW), and valine 547 each bind pyrroloquinoline quinone. The 79-residue stretch at 600–678 (EQVQAGKQLY…QIKLYVMSRE (79 aa)) folds into the Cytochrome c domain. The heme c site is built by cysteine 613, cysteine 616, histidine 617, and methionine 655.

It belongs to the bacterial PQQ dehydrogenase family. Monomer. The cofactor is pyrroloquinoline quinone. Requires Ca(2+) as cofactor. Heme c is required as a cofactor.

It is found in the periplasm. It catalyses the reaction 2 oxidized [azurin] + a primary alcohol = 2 reduced [azurin] + an aldehyde + 2 H(+). Its activity is regulated as follows. Inhibited by 10 mM 1-butanol. In terms of biological role, catalyzes the dye-linked oxidation of primary alcohols to the corresponding aldehydes and the (subsequent) oxidation of the aldehydes to carboxylic acids. Exhibits activity with longer mono-alcohols (C-4 to C-7) but not with methanol or glycerol. Reacts with 1,2-propanediol and 1,3-propanediol but not with sugar alcohols such as D-sorbitol. This Pseudomonas putida (Arthrobacter siderocapsulatus) protein is Quinohemoprotein alcohol dehydrogenase ADH IIB.